A 107-amino-acid chain; its full sequence is Phosphoribosyl-ATP pyrophosphatase (107 aa).

This sequence belongs to the PRA-PH family.

It localises to the cytoplasm. The enzyme catalyses 1-(5-phospho-beta-D-ribosyl)-ATP + H2O = 1-(5-phospho-beta-D-ribosyl)-5'-AMP + diphosphate + H(+). The protein operates within amino-acid biosynthesis; L-histidine biosynthesis; L-histidine from 5-phospho-alpha-D-ribose 1-diphosphate: step 2/9. This Bacillus anthracis (strain A0248) protein is Phosphoribosyl-ATP pyrophosphatase.